A 212-amino-acid chain; its full sequence is Acyl-homoserine-lactone synthase (212 aa).

Belongs to the autoinducer synthase family.

It catalyses the reaction a fatty acyl-[ACP] + S-adenosyl-L-methionine = an N-acyl-L-homoserine lactone + S-methyl-5'-thioadenosine + holo-[ACP] + H(+). In terms of biological role, required for the synthesis of OHHL (N-(3-oxohexanoyl)-L-homoserine lactone), an autoinducer molecule which binds to the EchR transcriptional regulator. The chain is Acyl-homoserine-lactone synthase (echI) from Dickeya chrysanthemi (Pectobacterium chrysanthemi).